The sequence spans 540 residues: Upstream-binding protein 1 (540 aa).

The residue at position 22 (serine 22) is a Phosphoserine. The 237-residue stretch at 60 to 296 (EHPPFQYVMC…EQKKSSKRTL (237 aa)) folds into the Grh/CP2 DB domain. Disordered regions lie at residues 236–270 (KPKGADRKQKTDREKMEKRTAHEKEKYQPSYDTTI) and 285–368 (EHEQ…QPSA). Over residues 238–262 (KGADRKQKTDREKMEKRTAHEKEKY) the composition is skewed to basic and acidic residues. The segment covering 320–368 (YVNNSPSPAPTFTSPQQSTCSVPDSNSSSPNHQGDGASQTSGEQIQPSA) has biased composition (polar residues). Residues serine 390 and serine 393 each carry the phosphoserine modification.

It belongs to the grh/CP2 family. CP2 subfamily. Interacts with TFCP2. Interacts with PIAS1, and is probably part of a complex containing TFCP2, UBP1 and PIAS1. Expressed in adrenal tissue, JEG-3, NCI-H295A, Hep-G2 and HeLa cell lines.

It is found in the nucleus. Functionally, functions as a transcriptional activator in a promoter context-dependent manner. Modulates the placental expression of CYP11A1. Involved in regulation of the alpha-globin gene in erythroid cells. Activation of the alpha-globin promoter in erythroid cells is via synergistic interaction with TFCP2. Involved in regulation of the alpha-globin gene in erythroid cells. Binds strongly to sequences around the HIV-1 initiation site and weakly over the TATA-box. Represses HIV-1 transcription by inhibiting the binding of TFIID to the TATA-box. The polypeptide is Upstream-binding protein 1 (UBP1) (Homo sapiens (Human)).